Reading from the N-terminus, the 363-residue chain is Sulfate/thiosulfate import ATP-binding protein CysA (363 aa).

The region spanning 3–237 (IEINNISKYF…PATRFVLEFL (235 aa)) is the ABC transporter domain. 35-42 (GPSGSGKT) is a binding site for ATP.

Belongs to the ABC transporter superfamily. Sulfate/tungstate importer (TC 3.A.1.6) family. As to quaternary structure, the complex is composed of two ATP-binding proteins (CysA), two transmembrane proteins (CysT and CysW) and a solute-binding protein (CysP).

Its subcellular location is the cell inner membrane. The catalysed reaction is sulfate(out) + ATP + H2O = sulfate(in) + ADP + phosphate + H(+). It catalyses the reaction thiosulfate(out) + ATP + H2O = thiosulfate(in) + ADP + phosphate + H(+). Functionally, part of the ABC transporter complex CysAWTP involved in sulfate/thiosulfate import. Responsible for energy coupling to the transport system. The polypeptide is Sulfate/thiosulfate import ATP-binding protein CysA (Yersinia pseudotuberculosis serotype I (strain IP32953)).